A 384-amino-acid chain; its full sequence is uncharacterized protein (384 aa).

Residues 137–303 (EHDAPNRLWQ…VPGSRYQPSA (167 aa)) enclose the Integrase catalytic domain.

This is an uncharacterized protein from Escherichia coli (strain K12).